The following is a 54-amino-acid chain: uncharacterized protein (54 aa).

The signal sequence occupies residues M1–W13.

The protein resides in the secreted. This is an uncharacterized protein from Saccharomyces cerevisiae (strain ATCC 204508 / S288c) (Baker's yeast).